The following is a 73-amino-acid chain: Putative defensin-like protein 270 (73 aa).

Residues 1 to 23 (MMSSKSHFVALLLIIFLIVNVQS) form the signal peptide. 4 disulfides stabilise this stretch: C33–C72, C39–C60, C45–C70, and C49–C71.

This sequence belongs to the DEFL family.

It is found in the secreted. This chain is Putative defensin-like protein 270, found in Arabidopsis thaliana (Mouse-ear cress).